Reading from the N-terminus, the 435-residue chain is Adenylosuccinate synthetase (435 aa).

GTP-binding positions include 22–28 (GDEGKGK) and 50–52 (GHT). The active-site Proton acceptor is the Asp23. The Mg(2+) site is built by Asp23 and Gly50. Residues 23–26 (DEGK), 48–51 (NAGH), Thr140, Arg154, Gln235, Thr250, and Arg314 contribute to the IMP site. The active-site Proton donor is the His51. 310–316 (ATTGRKR) contacts substrate. GTP-binding positions include Arg316, 342–344 (KLD), and 424–426 (SVG).

This sequence belongs to the adenylosuccinate synthetase family. In terms of assembly, homodimer. The cofactor is Mg(2+).

It localises to the cytoplasm. The enzyme catalyses IMP + L-aspartate + GTP = N(6)-(1,2-dicarboxyethyl)-AMP + GDP + phosphate + 2 H(+). The protein operates within purine metabolism; AMP biosynthesis via de novo pathway; AMP from IMP: step 1/2. Its function is as follows. Plays an important role in the de novo pathway of purine nucleotide biosynthesis. Catalyzes the first committed step in the biosynthesis of AMP from IMP. The chain is Adenylosuccinate synthetase from Chlorobaculum parvum (strain DSM 263 / NCIMB 8327) (Chlorobium vibrioforme subsp. thiosulfatophilum).